Reading from the N-terminus, the 388-residue chain is F-box/kelch-repeat protein At3g17530 (388 aa).

Positions 1-50 (MMISDLPHDLESEILSRVPAKSLAKWKTTCKRWYALFRDPSFVKKNFDKA) constitute an F-box domain. Kelch repeat units follow at residues 163-208 (CCYY…VSLK) and 336-383 (RIYI…AEEN).

The polypeptide is F-box/kelch-repeat protein At3g17530 (Arabidopsis thaliana (Mouse-ear cress)).